The following is an 810-amino-acid chain: LPS-assembly protein LptD (810 aa).

Disordered stretches follow at residues 1–26 (MTEQ…SRTG) and 54–79 (SAVP…PPVS). The signal sequence occupies residues 1–49 (MTEQRRSPNKRANKPPALSGLSSRTGRLPASALRPLVLAMAGLSVGAHA).

The protein belongs to the LptD family. In terms of assembly, component of the lipopolysaccharide transport and assembly complex. Interacts with LptE and LptA.

The protein resides in the cell outer membrane. Its function is as follows. Together with LptE, is involved in the assembly of lipopolysaccharide (LPS) at the surface of the outer membrane. This chain is LPS-assembly protein LptD, found in Cupriavidus pinatubonensis (strain JMP 134 / LMG 1197) (Cupriavidus necator (strain JMP 134)).